The sequence spans 178 residues: MNPLLQDYARILLEWNQTHNLSGAKNLSELEPQITDALKPLEFIKDFKSCLDIGSGAGLPAIPLALEKPEVKFILLEPRIKRAAFLNYLKSVLPLKNIEIIKKRLEDYQNLLQVDLITSRAVASSSFLIEKSQRFLKDKGYFLFYKGEQLKDEIACKDTECFMHQKRVYFYKSKESLC.

S-adenosyl-L-methionine contacts are provided by residues G54, L59, 105–106 (LE), and R120.

It belongs to the methyltransferase superfamily. RNA methyltransferase RsmG family.

It localises to the cytoplasm. It catalyses the reaction guanosine(527) in 16S rRNA + S-adenosyl-L-methionine = N(7)-methylguanosine(527) in 16S rRNA + S-adenosyl-L-homocysteine. In terms of biological role, specifically methylates the N7 position of guanine in position 527 of 16S rRNA. This is Ribosomal RNA small subunit methyltransferase G from Helicobacter pylori (strain ATCC 700392 / 26695) (Campylobacter pylori).